Here is a 112-residue protein sequence, read N- to C-terminus: Cuticle protein AM1239 (112 aa).

The region spanning Asp16–Ala85 is the Chitin-binding type R&amp;R domain. The O-linked (HexNAc) threonine glycan is linked to Thr79.

As to expression, arthrodial membrane.

The protein is Cuticle protein AM1239 of Cancer pagurus (Rock crab).